The chain runs to 429 residues: Glutamate-1-semialdehyde 2,1-aminomutase 2 (429 aa).

N6-(pyridoxal phosphate)lysine is present on K268.

This sequence belongs to the class-III pyridoxal-phosphate-dependent aminotransferase family. HemL subfamily. Homodimer. Requires pyridoxal 5'-phosphate as cofactor.

The protein localises to the cytoplasm. The catalysed reaction is (S)-4-amino-5-oxopentanoate = 5-aminolevulinate. Its pathway is porphyrin-containing compound metabolism; protoporphyrin-IX biosynthesis; 5-aminolevulinate from L-glutamyl-tRNA(Glu): step 2/2. This chain is Glutamate-1-semialdehyde 2,1-aminomutase 2, found in Staphylococcus aureus (strain Mu50 / ATCC 700699).